A 590-amino-acid polypeptide reads, in one-letter code: Aspartate--tRNA(Asp/Asn) ligase (590 aa).

Glutamate 170 contacts L-aspartate. An aspartate region spans residues glutamine 194–lysine 197. Arginine 216 lines the L-aspartate pocket. Residues arginine 216–glutamate 218 and glutamine 225 each bind ATP. Histidine 448 is an L-aspartate binding site. Glutamate 482 is a binding site for ATP. Position 489 (arginine 489) interacts with L-aspartate. ATP is bound at residue glycine 534–arginine 537. The tract at residues serine 557–glutamate 590 is disordered. Residues glutamine 575–glutamate 590 are compositionally biased toward basic and acidic residues.

Belongs to the class-II aminoacyl-tRNA synthetase family. Type 1 subfamily. As to quaternary structure, homodimer.

The protein resides in the cytoplasm. The enzyme catalyses tRNA(Asx) + L-aspartate + ATP = L-aspartyl-tRNA(Asx) + AMP + diphosphate. Functionally, aspartyl-tRNA synthetase with relaxed tRNA specificity since it is able to aspartylate not only its cognate tRNA(Asp) but also tRNA(Asn). Reaction proceeds in two steps: L-aspartate is first activated by ATP to form Asp-AMP and then transferred to the acceptor end of tRNA(Asp/Asn). The chain is Aspartate--tRNA(Asp/Asn) ligase from Mycobacterium sp. (strain KMS).